The following is a 561-amino-acid chain: Tectonic-like complex member MKS1 (561 aa).

The region spanning 314–442 (LRLFVNGEVV…TASTWRPMEL (129 aa)) is the C2 B9-type domain.

As to quaternary structure, part of the tectonic-like complex (also named B9 complex). Interacts with TMEM107. Interacts with TCTN3, AHI1, TCTN1, TCTN2, CC2D2A. Interacts with FLNA. Interacts with TMEM67. Interacts with B9D1 and B9D2.

The protein resides in the cytoplasm. It is found in the cytoskeleton. The protein localises to the cilium basal body. It localises to the microtubule organizing center. Its subcellular location is the centrosome. Component of the tectonic-like complex, a complex localized at the transition zone of primary cilia and acting as a barrier that prevents diffusion of transmembrane proteins between the cilia and plasma membranes. Involved in centrosome migration to the apical cell surface during early ciliogenesis. Required for ciliary structure and function, including a role in regulating length and appropriate number through modulating centrosome duplication. Required for cell branching morphology. This Rattus norvegicus (Rat) protein is Tectonic-like complex member MKS1 (Mks1).